A 155-amino-acid polypeptide reads, in one-letter code: Ribosomal RNA large subunit methyltransferase H (155 aa).

Residues leucine 72, glycine 103, and 122 to 127 each bind S-adenosyl-L-methionine; that span reads LSTLTL.

The protein belongs to the RNA methyltransferase RlmH family. Homodimer.

Its subcellular location is the cytoplasm. It carries out the reaction pseudouridine(1915) in 23S rRNA + S-adenosyl-L-methionine = N(3)-methylpseudouridine(1915) in 23S rRNA + S-adenosyl-L-homocysteine + H(+). Specifically methylates the pseudouridine at position 1915 (m3Psi1915) in 23S rRNA. This is Ribosomal RNA large subunit methyltransferase H from Klebsiella pneumoniae (strain 342).